Here is a 523-residue protein sequence, read N- to C-terminus: MCSWSLSSHTLTSPVRQAAMEPKSSSCGGAGIRLRLLVVLHLLLLVPSSAMAFNYADALAKSIIFFEGQRSGKLPPGNRMPWRADSGLTDGAQYNVDLVGGYYDAGDNVKFGLPMAFSTTMLAWSVLDFGKFMGAELPNARAAVRWGADYLLKAATATPGALYVQVADPNQDHRCWERPEDMDTPRSVYRVTADKPGSDVAGETAAALAASSMVFRRADPAYSARLLHAATQVFDFADRHRGSYSDSLASSVCPFYCSYSGYHDELLWGASWLHRASRNASFMSYVEANGMQLGAGDDDYSFSWDDKRVGTKVLLAKGFLRNRLHGLELYKAHSDSYICSLVPGTASFQSRYTPGGLLYREGSSNMQYVTTATFLMLAYAKYLRSSGATASCGDGGGGARGEVSAAELVAVAKRQVDYILGKNPAGMSYMVGFGCRYPRRAHHRGASMPSVRAHPGRISCDAGFGYLHSGEPNPNVLVGAVVGGPDSRDAFADDRGNFAQSEPATYINAPLVGALAYFAGTTK.

An N-terminal signal peptide occupies residues 1-52; the sequence is MCSWSLSSHTLTSPVRQAAMEPKSSSCGGAGIRLRLLVVLHLLLLVPSSAMA. Residue D107 is the Nucleophile of the active site. A glycan (N-linked (GlcNAc...) asparagine) is linked at N279. Catalysis depends on residues H442, D493, and E502.

This sequence belongs to the glycosyl hydrolase 9 (cellulase E) family.

Its subcellular location is the secreted. It carries out the reaction Endohydrolysis of (1-&gt;4)-beta-D-glucosidic linkages in cellulose, lichenin and cereal beta-D-glucans.. In Oryza sativa subsp. japonica (Rice), this protein is Endoglucanase 19.